The following is a 64-amino-acid chain: Large ribosomal subunit protein uL29 (64 aa).

Belongs to the universal ribosomal protein uL29 family.

The sequence is that of Large ribosomal subunit protein uL29 (rpl29) from Methanothermobacter thermautotrophicus (strain ATCC 29096 / DSM 1053 / JCM 10044 / NBRC 100330 / Delta H) (Methanobacterium thermoautotrophicum).